The primary structure comprises 311 residues: Ribosomal RNA small subunit methyltransferase H (311 aa).

S-adenosyl-L-methionine contacts are provided by residues 39–41 (GGH), D59, F87, D102, and H109.

This sequence belongs to the methyltransferase superfamily. RsmH family.

It localises to the cytoplasm. It carries out the reaction cytidine(1402) in 16S rRNA + S-adenosyl-L-methionine = N(4)-methylcytidine(1402) in 16S rRNA + S-adenosyl-L-homocysteine + H(+). Specifically methylates the N4 position of cytidine in position 1402 (C1402) of 16S rRNA. In Porphyromonas gingivalis (strain ATCC 33277 / DSM 20709 / CIP 103683 / JCM 12257 / NCTC 11834 / 2561), this protein is Ribosomal RNA small subunit methyltransferase H.